The chain runs to 188 residues: ATP synthase subunit b (188 aa).

A helical membrane pass occupies residues Leu19–Ile39.

Belongs to the ATPase B chain family. F-type ATPases have 2 components, F(1) - the catalytic core - and F(0) - the membrane proton channel. F(1) has five subunits: alpha(3), beta(3), gamma(1), delta(1), epsilon(1). F(0) has three main subunits: a(1), b(2) and c(10-14). The alpha and beta chains form an alternating ring which encloses part of the gamma chain. F(1) is attached to F(0) by a central stalk formed by the gamma and epsilon chains, while a peripheral stalk is formed by the delta and b chains.

Its subcellular location is the cell membrane. Functionally, f(1)F(0) ATP synthase produces ATP from ADP in the presence of a proton or sodium gradient. F-type ATPases consist of two structural domains, F(1) containing the extramembraneous catalytic core and F(0) containing the membrane proton channel, linked together by a central stalk and a peripheral stalk. During catalysis, ATP synthesis in the catalytic domain of F(1) is coupled via a rotary mechanism of the central stalk subunits to proton translocation. Its function is as follows. Component of the F(0) channel, it forms part of the peripheral stalk, linking F(1) to F(0). In Clavibacter michiganensis subsp. michiganensis (strain NCPPB 382), this protein is ATP synthase subunit b.